We begin with the raw amino-acid sequence, 265 residues long: Hydroxyethylthiazole kinase 2 (265 aa).

Position 39 (Met-39) interacts with substrate. Positions 115 and 168 each coordinate ATP. Gly-195 serves as a coordination point for substrate.

Belongs to the Thz kinase family. Requires Mg(2+) as cofactor.

The catalysed reaction is 5-(2-hydroxyethyl)-4-methylthiazole + ATP = 4-methyl-5-(2-phosphooxyethyl)-thiazole + ADP + H(+). Its pathway is cofactor biosynthesis; thiamine diphosphate biosynthesis; 4-methyl-5-(2-phosphoethyl)-thiazole from 5-(2-hydroxyethyl)-4-methylthiazole: step 1/1. Catalyzes the phosphorylation of the hydroxyl group of 4-methyl-5-beta-hydroxyethylthiazole (THZ). The chain is Hydroxyethylthiazole kinase 2 from Clostridium botulinum (strain Okra / Type B1).